The primary structure comprises 412 residues: MSSKGSVVLAYSGGLDTSCILVWLKEQGYDVIAYLANIGQKEDFEEARKKALKLGAKKVFIEDVSREFVEEFIWPAIQSSALYEDRYLLGTSLARPCIARKQVEIAQREGAKYVSHGATGKGNDQVRFELSCYSLAPQIKVIAPWRMPEFYNRFKGRNDLMEYAKQHGIPIPVTPKNPWSMDENLMHISYEAGILENPKNQAPPGLYTKTQDPAKAPNTPDILEIEFKKGVPVKVTNVKDGTTHQTSLELFMYLNEVAGKHGVGRIDIVENRFIGMKSRGIYETPAGTILYHAHLDIEAFTMDREVRKIKQGLGLKFAELVYTGFWHSPECEFVRHCIAKSQERVEGKVQVSVLKGQVYILGRESPLSLYNEELVSMNVQGDYEPTDATGFININSLRLKEYHRLQSKVTAK.

ATP-binding positions include 10-18 and A36; that span reads AYSGGLDTS. 2 residues coordinate L-citrulline: Y87 and S92. Y87 is subject to Phosphotyrosine. K112 carries the N6-acetyllysine modification. Y113 carries the phosphotyrosine modification. 115–123 is a binding site for ATP; it reads SHGATGKGN. The L-aspartate site is built by T119, N123, and D124. Residue N123 coordinates L-citrulline. R127 provides a ligand contact to L-citrulline. N6-acetyllysine; by CLOCK is present on residues K165 and K176. The L-citrulline site is built by S180 and S189. The residue at position 180 (S180) is a Phosphoserine. T219 carries the post-translational modification Phosphothreonine. The L-citrulline site is built by E270 and Y282.

The protein belongs to the argininosuccinate synthase family. Type 1 subfamily. In terms of assembly, homotetramer. Interacts with NMRAL1. Interacts with CLOCK; in a circadian manner. Forms tissue-specific complexes with ASL, SLC7A1, HSP90AA1 and nitric oxide synthase NOS1, NOS2 or NOS3; the complex regulates cell-autonomous L-arginine synthesis and citrulline recycling while channeling extracellular L-arginine to nitric oxide synthesis pathway. Post-translationally, acetylated by CLOCK in a circadian manner which negatively regulates its enzyme activity. Deacetylated by histone deacetylases. In terms of tissue distribution, expressed in adult liver.

The protein localises to the cytoplasm. It localises to the cytosol. It carries out the reaction L-citrulline + L-aspartate + ATP = 2-(N(omega)-L-arginino)succinate + AMP + diphosphate + H(+). The protein operates within amino-acid biosynthesis; L-arginine biosynthesis; L-arginine from L-ornithine and carbamoyl phosphate: step 2/3. It functions in the pathway nitrogen metabolism; urea cycle; (N(omega)-L-arginino)succinate from L-aspartate and L-citrulline: step 1/1. Its function is as follows. One of the enzymes of the urea cycle, the metabolic pathway transforming neurotoxic amonia produced by protein catabolism into inocuous urea in the liver of ureotelic animals. Catalyzes the formation of arginosuccinate from aspartate, citrulline and ATP and together with ASL it is responsible for the biosynthesis of arginine in most body tissues. The chain is Argininosuccinate synthase from Homo sapiens (Human).